We begin with the raw amino-acid sequence, 283 residues long: Elongation factor Ts (283 aa).

An involved in Mg(2+) ion dislocation from EF-Tu region spans residues 79 to 82; the sequence is TDFV.

It belongs to the EF-Ts family.

The protein localises to the cytoplasm. In terms of biological role, associates with the EF-Tu.GDP complex and induces the exchange of GDP to GTP. It remains bound to the aminoacyl-tRNA.EF-Tu.GTP complex up to the GTP hydrolysis stage on the ribosome. The chain is Elongation factor Ts from Shewanella denitrificans (strain OS217 / ATCC BAA-1090 / DSM 15013).